The sequence spans 126 residues: Desulfoferrodoxin (126 aa).

Residues Cys10, Cys13, Cys29, Cys30, His49, His69, His75, Cys116, and His119 each contribute to the Fe cation site.

It belongs to the desulfoferrodoxin family. In terms of assembly, homodimer. Fe(3+) serves as cofactor. Requires Cu(2+) as cofactor.

The enzyme catalyses reduced [rubredoxin] + superoxide + 2 H(+) = oxidized [rubredoxin] + H2O2. Its function is as follows. Catalyzes the one-electron reduction of superoxide anion radical to hydrogen peroxide at a nonheme ferrous iron center. Plays a fundamental role in case of oxidative stress via its superoxide detoxification activity. The protein is Desulfoferrodoxin (dfx) of Syntrophotalea carbinolica (strain DSM 2380 / NBRC 103641 / GraBd1) (Pelobacter carbinolicus).